The following is a 410-amino-acid chain: Porin-like protein GalP (410 aa).

The first 25 residues, 1 to 25, serve as a signal peptide directing secretion; sequence MKCRTLYPLVPTFALAASLPLQALA.

It belongs to the outer membrane porin (Opr) (TC 1.B.25) family.

Functionally, probable transporter, possibly involved in the gallate degradation pathway. May play a role in the uptake of low gallate concentrations that may exist in the natural habitats of P.putida. The chain is Porin-like protein GalP (galP) from Pseudomonas putida (strain ATCC 47054 / DSM 6125 / CFBP 8728 / NCIMB 11950 / KT2440).